The chain runs to 32 residues: uncharacterized protein (32 aa).

This is an uncharacterized protein from Saccharomyces cerevisiae (strain ATCC 204508 / S288c) (Baker's yeast).